Consider the following 117-residue polypeptide: Small ribosomal subunit protein bS6 (117 aa).

Residues 96-117 are disordered; that stretch reads HAEGPSVQMQKRDERDSRRERR. The segment covering 105–117 has biased composition (basic and acidic residues); it reads QKRDERDSRRERR.

It belongs to the bacterial ribosomal protein bS6 family.

In terms of biological role, binds together with bS18 to 16S ribosomal RNA. This chain is Small ribosomal subunit protein bS6, found in Ruegeria pomeroyi (strain ATCC 700808 / DSM 15171 / DSS-3) (Silicibacter pomeroyi).